Consider the following 94-residue polypeptide: Small ribosomal subunit protein uS19 (94 aa).

It belongs to the universal ribosomal protein uS19 family.

Its function is as follows. Protein S19 forms a complex with S13 that binds strongly to the 16S ribosomal RNA. This Caldicellulosiruptor saccharolyticus (strain ATCC 43494 / DSM 8903 / Tp8T 6331) protein is Small ribosomal subunit protein uS19.